Consider the following 305-residue polypeptide: Coenzyme PQQ synthesis protein B (305 aa).

Belongs to the PqqB family.

Its pathway is cofactor biosynthesis; pyrroloquinoline quinone biosynthesis. Functionally, may be involved in the transport of PQQ or its precursor to the periplasm. This Methylobacillus flagellatus protein is Coenzyme PQQ synthesis protein B.